We begin with the raw amino-acid sequence, 166 residues long: Myeloid-derived growth factor (166 aa).

The first 24 residues, 1-24 (MAAPSGGFWTAVVLAAAALKLAAA), serve as a signal peptide directing secretion.

It belongs to the MYDGF family. In terms of tissue distribution, expressed in prostate, spleen and lung, and weakly expressed in the left ventricle (LF) and liver. Expressed predominantly in inflammatory cells, such as monocytes and macrophages, and weakly expressed in neutrophils, T-cells, B-cells, endothelial cells and cardiac myocytes, after myocardial infarction (MI) (at protein level).

Its subcellular location is the secreted. It localises to the endoplasmic reticulum-Golgi intermediate compartment. The protein localises to the endoplasmic reticulum. The protein resides in the golgi apparatus. Functionally, bone marrow-derived monocyte and paracrine-acting protein that promotes cardiac myocyte survival and adaptive angiogenesis for cardiac protection and/or repair after myocardial infarction (MI). Stimulates endothelial cell proliferation through a MAPK1/3-, STAT3- and CCND1-mediated signaling pathway. Inhibits cardiac myocyte apoptosis in a PI3K/AKT-dependent signaling pathway. This Mus musculus (Mouse) protein is Myeloid-derived growth factor.